The chain runs to 243 residues: uncharacterized protein (243 aa).

The GP-PDE domain maps to 2–240 (TKIFAHRGAS…DFPEKASALL (239 aa)).

This is an uncharacterized protein from Bacillus subtilis (strain 168).